The sequence spans 463 residues: Dopaminechrome tautomerase (463 aa).

It belongs to the major royal jelly protein family.

Its subcellular location is the secreted. The enzyme catalyses dopaminechrome = 5,6-dihydroxyindole. It functions in the pathway pigment biosynthesis; melanin biosynthesis. Functionally, catalyzes the conversion of dopaminechrome to 5,6-dihydroxyindole in the eumelanin biosynthetic pathway originating from dopamine. Catalyzes tautomerization of dopaminechrome to 5,6-dihydroxyindole during eumelanin biosynthesis. Acts both dopaminechrome and N-methyl dopaminechrome but not on dopachrome or other aminochromes tested. The polypeptide is Dopaminechrome tautomerase (Drosophila melanogaster (Fruit fly)).